Here is a 361-residue protein sequence, read N- to C-terminus: Chorismate synthase (361 aa).

Residues Arg-48 and Arg-54 each coordinate NADP(+). FMN is bound by residues 125-127 (RSS), 238-239 (NA), Gly-278, 293-297 (KPTSS), and Arg-319.

It belongs to the chorismate synthase family. In terms of assembly, homotetramer. The cofactor is FMNH2.

The enzyme catalyses 5-O-(1-carboxyvinyl)-3-phosphoshikimate = chorismate + phosphate. The protein operates within metabolic intermediate biosynthesis; chorismate biosynthesis; chorismate from D-erythrose 4-phosphate and phosphoenolpyruvate: step 7/7. Its function is as follows. Catalyzes the anti-1,4-elimination of the C-3 phosphate and the C-6 proR hydrogen from 5-enolpyruvylshikimate-3-phosphate (EPSP) to yield chorismate, which is the branch point compound that serves as the starting substrate for the three terminal pathways of aromatic amino acid biosynthesis. This reaction introduces a second double bond into the aromatic ring system. In Shigella boydii serotype 18 (strain CDC 3083-94 / BS512), this protein is Chorismate synthase.